The sequence spans 550 residues: Sorting nexin-33 (550 aa).

In terms of domain architecture, SH3 spans 1–61 (MALKARALYS…PASYVEIQSS (61 aa)). Residues 62–152 (RSGSVQVDYS…QDSIASGKRG (91 aa)) are disordered. Positions 86-102 (YDDDDEEDDDDWDDWDD) are enriched in acidic residues. Residues 128-144 (SRPEYSHRPRPALERQD) are compositionally biased toward basic and acidic residues. The PX domain occupies 206-316 (FNCSVEEPTK…HFLGCQDEKQ (111 aa)). The 204-residue stretch at 347 to 550 (LQDVEERVDV…EKTLHLYDEL (204 aa)) folds into the BAR domain.

Belongs to the sorting nexin family.

Its subcellular location is the cytoplasm. It localises to the cytosol. It is found in the membrane. The protein localises to the cytoplasmic vesicle membrane. Its function is as follows. Plays a role in the reorganization of the cytoskeleton, endocytosis and cellular vesicle trafficking, both during interphase and at the end of mitotic cell divisions. Required for efficient progress through mitosis and cytokinesis. Required for normal formation of the cleavage furrow at the end of mitosis. Modulates endocytosis of cell-surface proteins. Promotes membrane tubulation (in vitro). May promote the formation of macropinosomes. This chain is Sorting nexin-33 (snx33), found in Xenopus laevis (African clawed frog).